The following is a 410-amino-acid chain: MAPRTIVKVDLNKPAWEQPNLHNRWHPDIPFAESIDEGETVKIECLDWTGGQIKNDDSAEDIKNVDLTRIHYLSGPFEIKGAEPGDVLVVEIQDVQPLENQPWGYSGIFAKENGGGFLDEHYPKAAKAVFDFEGIFCSSRHIPGVRFPGLIHPGIIGTAPSKEILAEWNRREGALVAENPHSTHVMAQLPNASYAFAGILADEKLSATVASEGARTIPGRPENGGNCDIKNLSRGSKVFLPVHVPGAKLSIGDLHFSQGDGEISFCGAIEMAGSITIKCKILKNGISDLAMKSPMYLPGPVEPHFSPSRYLTFEGFSVDESGKQHYLCTTTAYRQTCLRVIEYFRRFGYNDYQLYLLLSCAPIQGHVAGIVDIPNSCTTIGVPMDIFEFDVSPNGKAKIIDLGSCAFANS.

It belongs to the acetamidase/formamidase family. In terms of assembly, homotrimer.

It is found in the cytoplasm. It localises to the nucleus. The catalysed reaction is formamide + H2O = formate + NH4(+). In terms of biological role, hydrolyzes formamide with the production of ammonia which can be used as a source of nitrogen for growth. May also act on acetamide, propanamide and butanamide. The chain is Putative formamidase C869.04 from Schizosaccharomyces pombe (strain 972 / ATCC 24843) (Fission yeast).